Here is a 90-residue protein sequence, read N- to C-terminus: MVRIRLTRMGKKKQPFYRIVVVDQKKKRDGAYVESLGYYNPLKEPYEVKVDIDRAVEWMLKGAQPSETVSKLLGKLGLYEKLEEAKSKKA.

Belongs to the bacterial ribosomal protein bS16 family.

This chain is Small ribosomal subunit protein bS16, found in Fervidobacterium nodosum (strain ATCC 35602 / DSM 5306 / Rt17-B1).